The following is a 636-amino-acid chain: 1-deoxy-D-xylulose-5-phosphate synthase (636 aa).

Thiamine diphosphate-binding positions include His74 and 115–117 (GHS). A Mg(2+)-binding site is contributed by Asp146. Thiamine diphosphate-binding positions include 147–148 (GA), Asn175, Tyr286, and Glu367. Asn175 is a binding site for Mg(2+).

It belongs to the transketolase family. DXPS subfamily. As to quaternary structure, homodimer. Requires Mg(2+) as cofactor. Thiamine diphosphate is required as a cofactor.

It carries out the reaction D-glyceraldehyde 3-phosphate + pyruvate + H(+) = 1-deoxy-D-xylulose 5-phosphate + CO2. It functions in the pathway metabolic intermediate biosynthesis; 1-deoxy-D-xylulose 5-phosphate biosynthesis; 1-deoxy-D-xylulose 5-phosphate from D-glyceraldehyde 3-phosphate and pyruvate: step 1/1. In terms of biological role, catalyzes the acyloin condensation reaction between C atoms 2 and 3 of pyruvate and glyceraldehyde 3-phosphate to yield 1-deoxy-D-xylulose-5-phosphate (DXP). The polypeptide is 1-deoxy-D-xylulose-5-phosphate synthase (Halothermothrix orenii (strain H 168 / OCM 544 / DSM 9562)).